The chain runs to 101 residues: Small ribosomal subunit protein uS14 (101 aa).

It belongs to the universal ribosomal protein uS14 family. Part of the 30S ribosomal subunit. Contacts proteins S3 and S10.

Functionally, binds 16S rRNA, required for the assembly of 30S particles and may also be responsible for determining the conformation of the 16S rRNA at the A site. This is Small ribosomal subunit protein uS14 from Paraburkholderia phytofirmans (strain DSM 17436 / LMG 22146 / PsJN) (Burkholderia phytofirmans).